Consider the following 284-residue polypeptide: Aspartate dehydrogenase domain-containing protein (284 aa).

It belongs to the L-aspartate dehydrogenase family.

This chain is Aspartate dehydrogenase domain-containing protein (aspdh), found in Xenopus tropicalis (Western clawed frog).